The following is a 783-amino-acid chain: Endonuclease MutS2 (783 aa).

333-340 (GPNTGGKT) is an ATP binding site. The 76-residue stretch at 708-783 (IDLRGKNIEE…GLGATFIYLK (76 aa)) folds into the Smr domain.

Belongs to the DNA mismatch repair MutS family. MutS2 subfamily. Homodimer. Binds to stalled ribosomes, contacting rRNA.

Endonuclease that is involved in the suppression of homologous recombination and thus may have a key role in the control of bacterial genetic diversity. Its function is as follows. Acts as a ribosome collision sensor, splitting the ribosome into its 2 subunits. Detects stalled/collided 70S ribosomes which it binds and splits by an ATP-hydrolysis driven conformational change. Acts upstream of the ribosome quality control system (RQC), a ribosome-associated complex that mediates the extraction of incompletely synthesized nascent chains from stalled ribosomes and their subsequent degradation. Probably generates substrates for RQC. The sequence is that of Endonuclease MutS2 from Finegoldia magna (strain ATCC 29328 / DSM 20472 / WAL 2508) (Peptostreptococcus magnus).